A 316-amino-acid polypeptide reads, in one-letter code: Very-long-chain 3-oxooacyl-coA reductase let-767 (316 aa).

Residues isoleucine 52–threonine 80 and aspartate 106 each bind NADP(+). A substrate-binding site is contributed by serine 189. Tyrosine 202 functions as the Proton acceptor in the catalytic mechanism. Lysine 206 contributes to the NADP(+) binding site.

This sequence belongs to the short-chain dehydrogenases/reductases (SDR) family. 17-beta-HSD 3 subfamily.

It catalyses the reaction a very-long-chain (3R)-3-hydroxyacyl-CoA + NADP(+) = a very-long-chain 3-oxoacyl-CoA + NADPH + H(+). It functions in the pathway lipid metabolism; fatty acid biosynthesis. Its function is as follows. Required for branched chain fatty acid synthesis. Catalyzes the reduction of the 3-ketoacyl-CoA intermediate that is formed in each cycle of fatty acid elongation. Very long-chain fatty acids (VLCFAs) serve as precursors for ceramide and sphingolipids. May also be required for sterol hormone production. In Caenorhabditis briggsae, this protein is Very-long-chain 3-oxooacyl-coA reductase let-767.